The sequence spans 229 residues: Urease accessory protein UreF (229 aa).

The protein belongs to the UreF family. In terms of assembly, ureD, UreF and UreG form a complex that acts as a GTP-hydrolysis-dependent molecular chaperone, activating the urease apoprotein by helping to assemble the nickel containing metallocenter of UreC. The UreE protein probably delivers the nickel.

The protein localises to the cytoplasm. Required for maturation of urease via the functional incorporation of the urease nickel metallocenter. In Trichormus variabilis (strain ATCC 29413 / PCC 7937) (Anabaena variabilis), this protein is Urease accessory protein UreF.